We begin with the raw amino-acid sequence, 620 residues long: Chaperone protein HscA homolog (620 aa).

The protein belongs to the heat shock protein 70 family.

Functionally, chaperone involved in the maturation of iron-sulfur cluster-containing proteins. Has a low intrinsic ATPase activity which is markedly stimulated by HscB. This chain is Chaperone protein HscA homolog, found in Shewanella sp. (strain MR-7).